The sequence spans 120 residues: UPF0102 protein Moth_0988 (120 aa).

The protein belongs to the UPF0102 family.

This Moorella thermoacetica (strain ATCC 39073 / JCM 9320) protein is UPF0102 protein Moth_0988.